We begin with the raw amino-acid sequence, 415 residues long: Multidrug resistance protein MdtA (415 aa).

A signal peptide spans 1–21 (MKGSYKSRWVIVIVVVIAAIA). Disordered stretches follow at residues 32–59 (SRSAAPGATKQAQQSPAGGRRGMRSGPL) and 392–415 (EAQSATTSEEKATSREYAKKGARS). Basic and acidic residues predominate over residues 399 to 415 (SEEKATSREYAKKGARS).

Belongs to the membrane fusion protein (MFP) (TC 8.A.1) family. Part of a tripartite efflux system composed of MdtA, MdtB and MdtC.

It is found in the cell inner membrane. Functionally, the MdtABC tripartite complex confers resistance against novobiocin and deoxycholate. The chain is Multidrug resistance protein MdtA from Escherichia coli (strain SMS-3-5 / SECEC).